The chain runs to 423 residues: COUP transcription factor 1 (423 aa).

The disordered stretch occupies residues 1 to 81 (MAMVVSSWRD…QGPPGSGQSQ (81 aa)). A compositionally biased stretch (low complexity) spans 39-67 (EQQQQAGSGAPHTPQTPGQPGAPATPGTA). Positions 83–158 (HIECVVCGDK…VGMRREAVQR (76 aa)) form a DNA-binding region, nuclear receptor. 2 consecutive NR C4-type zinc fingers follow at residues 86 to 106 (CVVC…CEGC) and 122 to 146 (CRAN…LKKC). The NR LBD domain maps to 184 to 410 (YLSGYISLLL…TLIRDMLLSG (227 aa)).

It belongs to the nuclear hormone receptor family. NR2 subfamily. As to quaternary structure, binds DNA as dimer; homodimer and probable heterodimer with NR2F6. Interacts with GTF2B; this interaction is direct. Interacts with COPS2.

Its subcellular location is the nucleus. Functionally, coup (chicken ovalbumin upstream promoter) transcription factor binds to the ovalbumin promoter and, in conjunction with another protein (S300-II) stimulates initiation of transcription. Binds to both direct repeats and palindromes of the 5'-AGGTCA-3' motif. Represses transcriptional activity of LHCG. The polypeptide is COUP transcription factor 1 (NR2F1) (Homo sapiens (Human)).